Here is a 908-residue protein sequence, read N- to C-terminus: MGRQGLIHIVILQYKLGGIYPMKAVDIRQMYLEFFKEKGHHHEPSAPLVPINDPSLLWINSGVATLKPYFDGRVIPDNPRITNAQKSIRTNDIENVGKTARHHTFFEMLGNFSIGDYFKKEAIHYAWEFLTDKKWMGFDPELLSITIHPEDQEAYDVWHQEIGIPEERLIRLEGNFWDIGEGPSGPNSEIFYDRGVEYGSDENDPEMYPGGENERYLEIWNLVFSQFNHNPDGTYTPLPKQNIDTGMGLERIVSVVQNVPTNFDTDLFMPIIEKIEEFANRKYKRPSEVDLNEIFGSEEDINTPFKVIADHIRTVAFAIGDGALPSNEGRGYVLRRLLRRAVRYAKQIGIEKPFMFELVPTVGKIMEDFYPEVTEKCEFIQRVIKNEEIRFHETLDGGLAIFNEVAESQKAAGHDFIPGADAFRLYDTYGFPIELTEEYAEEVGMKVDHEGFETAMEEQRERARAARQDVDSMQVQNEVLANLTVASEFVGFDTLVANTEIAAMIVNGQVEKVASEGQEALVILAKTPFYAEMGGQIADSGIISNDSFTAVVKDVQKAPNGQPLHTVIVESGEMHVEDAVQAIVHRDDRNLIIKNHTATHIMQRALKDVLGDHVNQAGSYVGPDRLRFDFSHFGQVTKEELQQIERIVNEKVWDDIEVVIEEMAIDQAKAKGAMALFGEKYGDVVRVVSIGDYSIELCGGIHVKRSSEIGFFKIVSEGGIGAGTRRIEAVTGKVAYEVVKEEEALLNDAAALLKANPKDIVTKVQALQGDYKELQRDNEALSQKIANAHSWGNCRCSTNNWRCHSSFYKSRSKDNNLLRQMMDDLKALMPKAVIVLGAVDGDLSDAMCRGITIINRWQLPCWKYREIWCQKLVVVIGGVRPDMAMAGAKDASKLDEALLSVYDYVKSI.

Residues histidine 596, histidine 600, cysteine 698, and histidine 702 each contribute to the Zn(2+) site.

It belongs to the class-II aminoacyl-tRNA synthetase family. Zn(2+) serves as cofactor.

The protein localises to the cytoplasm. The enzyme catalyses tRNA(Ala) + L-alanine + ATP = L-alanyl-tRNA(Ala) + AMP + diphosphate. Its function is as follows. Catalyzes the attachment of alanine to tRNA(Ala) in a two-step reaction: alanine is first activated by ATP to form Ala-AMP and then transferred to the acceptor end of tRNA(Ala). Also edits incorrectly charged Ser-tRNA(Ala) and Gly-tRNA(Ala) via its editing domain. This chain is Alanine--tRNA ligase, found in Lysinibacillus sphaericus (strain C3-41).